The sequence spans 735 residues: Peroxisomal multifunctional enzyme type 2 (735 aa).

Positions 1–305 (MASPLRFDGR…IEVLHKIDSE (305 aa)) are (3R)-hydroxyacyl-CoA dehydrogenase. NAD(+)-binding positions include 16–40 (GAGG…VVND), L21, and D40. An N6-acetyllysine; alternate modification is found at K46. Position 46 is an N6-succinyllysine; alternate (K46). Residue S52 is modified to Phosphoserine. K57 and K68 each carry N6-succinyllysine. Residue 75–76 (SV) participates in NAD(+) binding. Position 84 is an N6-succinyllysine (K84). N99 contacts NAD(+). S151 serves as a coordination point for substrate. Residue Y164 is the Proton acceptor of the active site. NAD(+) contacts are provided by residues 164–168 (YSAAK) and 196–199 (AGSR). The residue at position 265 (T265) is a Phosphothreonine. K275 carries the post-translational modification N6-succinyllysine. Phosphoserine is present on residues S304 and S308. The enoyl-CoA hydratase 2 stretch occupies residues 321–621 (SGFAGVVGHK…AQTPSEGGAL (301 aa)). K355 carries the post-translational modification N6-succinyllysine. Residue 405–406 (HG) participates in (3R)-3-hydroxydecanoyl-CoA binding. K423 is subject to N6-succinyllysine. (3R)-3-hydroxydecanoyl-CoA contacts are provided by residues K434, 509–514 (DSNPLH), G532, and F562. Residues 483–599 (VPSRPPDAVL…QETGDIVISN (117 aa)) form the MaoC-like domain. K564 carries the N6-acetyllysine modification. 2 positions are modified to N6-succinyllysine: K578 and K662. The SCP2 domain occupies 623–735 (SALVFGEIGR…QMILKDYAKL (113 aa)). K668 bears the N6-acetyllysine mark. Substrate contacts are provided by Q705 and Q723. K724 is subject to N6-succinyllysine. The short motif at 733 to 735 (AKL) is the Microbody targeting signal element.

This sequence belongs to the short-chain dehydrogenases/reductases (SDR) family. Homodimer.

The protein localises to the peroxisome. The catalysed reaction is a (3R)-3-hydroxyacyl-CoA + NAD(+) = a 3-oxoacyl-CoA + NADH + H(+). It carries out the reaction (24R,25R)-3alpha,7alpha,12alpha,24-tetrahydroxy-5beta-cholestan-26-oyl-CoA = (24E)-3alpha,7alpha,12alpha-trihydroxy-5beta-cholest-24-en-26-oyl-CoA + H2O. The enzyme catalyses a (3R)-3-hydroxyacyl-CoA = a (2E)-enoyl-CoA + H2O. It catalyses the reaction (2E)-octenoyl-CoA + H2O = (3R)-hydroxyoctanoyl-CoA. The catalysed reaction is (3R)-hydroxyoctanoyl-CoA + NAD(+) = 3-oxooctanoyl-CoA + NADH + H(+). It carries out the reaction (3R)-hydroxyhexadecanoyl-CoA + NAD(+) = 3-oxohexadecanoyl-CoA + NADH + H(+). The enzyme catalyses (2E)-hexadecenedioyl-CoA + H2O = (3R)-hydroxyhexadecanedioyl-CoA. It catalyses the reaction (3R)-hydroxyhexadecanedioyl-CoA + NAD(+) = 3-oxohexadecanedioyl-CoA + NADH + H(+). The catalysed reaction is (3R)-hydroxyhexadecanoyl-CoA = (2E)-hexadecenoyl-CoA + H2O. It carries out the reaction (3R)-3-hydroxydecanoyl-CoA = (2E)-decenoyl-CoA + H2O. The enzyme catalyses (3R)-3-hydroxydecanoyl-CoA + NAD(+) = 3-oxodecanoyl-CoA + NADH + H(+). It catalyses the reaction (24R,25R)-3alpha,7alpha,12alpha,24-tetrahydroxy-5beta-cholestan-26-oyl-CoA + NAD(+) = 3alpha,7alpha,12alpha-trihydroxy-24-oxo-5beta-cholestan-26-oyl-CoA + NADH + H(+). Its pathway is lipid metabolism; fatty acid beta-oxidation. Functionally, bifunctional enzyme acting on the peroxisomal fatty acid beta-oxidation pathway. Catalyzes two of the four reactions in fatty acid degradation: hydration of 2-enoyl-CoA (trans-2-enoyl-CoA) to produce (3R)-3-hydroxyacyl-CoA, and dehydrogenation of (3R)-3-hydroxyacyl-CoA to produce 3-ketoacyl-CoA (3-oxoacyl-CoA), which is further metabolized by SCPx. Can use straight-chain and branched-chain fatty acids, as well as bile acid intermediates as substrates. In Rattus norvegicus (Rat), this protein is Peroxisomal multifunctional enzyme type 2.